A 366-amino-acid chain; its full sequence is Transmembrane protein 25 (366 aa).

A signal peptide spans 1-26; the sequence is MALPPGPAALRHTLLLLPALLSSGWG. Over 27-232 the chain is Extracellular; that stretch reads ELEPQIDGQT…APGLLATRVE (206 aa). The region spanning 30 to 123 is the Ig-like domain; sequence PQIDGQTWAE…SGRSANASVI (94 aa). A disulfide bond links C52 and C107. N-linked (GlcNAc...) asparagine glycosylation is found at N106, N162, N175, N192, and N205. Residues 233-253 traverse the membrane as a helical segment; that stretch reads VPLLGIVVAAGLALGTLVGFS. Residues 254–366 are Cytoplasmic-facing; the sequence is TLVACLVCRK…SSVSSDEIWL (113 aa). The span at 299-308 shows a compositional bias: polar residues; sequence PSNLQLNDLT. Residues 299 to 335 are disordered; that stretch reads PSNLQLNDLTPDSRAVKPADRQMAQNNSRPELLDPEP.

In terms of assembly, interacts with GRIN2B. In terms of tissue distribution, expressed throughout the brain with higher levels in the pyramidal cell layer of the hippocampal CA1 and CA3 regions. Also highly expressed within the hippocampal dentate gyrus region and cerebellum and in scattered neurons in the cerebral cortex.

The protein resides in the cell membrane. Its subcellular location is the secreted. The protein localises to the late endosome. It is found in the lysosome. In terms of biological role, in neurons, modulates the degradation of NMDA receptor GRIN2B subunit. Plays a role in the regulation of neuronal excitability. The sequence is that of Transmembrane protein 25 (TMEM25) from Homo sapiens (Human).